The sequence spans 598 residues: 2-succinyl-5-enolpyruvyl-6-hydroxy-3-cyclohexene-1-carboxylate synthase (598 aa).

Belongs to the TPP enzyme family. MenD subfamily. As to quaternary structure, homodimer. Mg(2+) serves as cofactor. It depends on Mn(2+) as a cofactor. Requires thiamine diphosphate as cofactor.

It catalyses the reaction isochorismate + 2-oxoglutarate + H(+) = 5-enolpyruvoyl-6-hydroxy-2-succinyl-cyclohex-3-ene-1-carboxylate + CO2. It functions in the pathway quinol/quinone metabolism; 1,4-dihydroxy-2-naphthoate biosynthesis; 1,4-dihydroxy-2-naphthoate from chorismate: step 2/7. It participates in cofactor biosynthesis; phylloquinone biosynthesis. In terms of biological role, catalyzes the thiamine diphosphate-dependent decarboxylation of 2-oxoglutarate and the subsequent addition of the resulting succinic semialdehyde-thiamine pyrophosphate anion to isochorismate to yield 2-succinyl-5-enolpyruvyl-6-hydroxy-3-cyclohexene-1-carboxylate (SEPHCHC). This Prochlorococcus marinus (strain NATL1A) protein is 2-succinyl-5-enolpyruvyl-6-hydroxy-3-cyclohexene-1-carboxylate synthase.